Here is a 144-residue protein sequence, read N- to C-terminus: Large ribosomal subunit protein uL14 (144 aa).

This sequence belongs to the universal ribosomal protein uL14 family. As to quaternary structure, part of the 50S ribosomal subunit. Forms a cluster with proteins L3 and L24e, part of which may contact the 16S rRNA in 2 intersubunit bridges.

In terms of biological role, binds to 23S rRNA. Forms part of two intersubunit bridges in the 70S ribosome. The polypeptide is Large ribosomal subunit protein uL14 (Pyrobaculum arsenaticum (strain DSM 13514 / JCM 11321 / PZ6)).